Consider the following 253-residue polypeptide: MKFCIIGYPVSHSISPRLYNEYFKRAGMNHSYGMEEIPPESFDTEIRRILEEYDGFNATIPHKERVMRYVEPSEDAQRIKAVNCVFRGKGYNTDWVGVVKSLEGVEVKEPVVVVGAGGAARAVIYALLQMGVKDIWVVNRTIERAKALDFPVKIFSLDQLDEVVKKAKSLFNTTSVGMKGEKLTVSEASLKGLYLVYDVVYFETPLVSDAKRLGVEHVVKGNLMFYYQAMENLKIWGIYDERSFKEVFEEVLR.

Lys-63 acts as the Proton acceptor in catalysis. Residue 115-119 coordinates NADP(+); it reads GAGGA.

Belongs to the shikimate dehydrogenase family.

It carries out the reaction shikimate + NADP(+) = 3-dehydroshikimate + NADPH + H(+). The protein operates within metabolic intermediate biosynthesis; chorismate biosynthesis; chorismate from D-erythrose 4-phosphate and phosphoenolpyruvate: step 4/7. The polypeptide is Shikimate dehydrogenase (aroE) (Thermotoga neapolitana (strain ATCC 49049 / DSM 4359 / NBRC 107923 / NS-E)).